Consider the following 466-residue polypeptide: Asparagine--tRNA ligase (466 aa).

It belongs to the class-II aminoacyl-tRNA synthetase family. As to quaternary structure, homodimer.

It localises to the cytoplasm. It catalyses the reaction tRNA(Asn) + L-asparagine + ATP = L-asparaginyl-tRNA(Asn) + AMP + diphosphate + H(+). The polypeptide is Asparagine--tRNA ligase (Shewanella baltica (strain OS185)).